The following is a 1549-amino-acid chain: ATP-binding cassette sub-family C member 9 (1549 aa).

At 1–30 the chain is on the extracellular side; it reads MSLSFCGNNISSYNINDGVLQNSCFVDALN. The N-linked (GlcNAc...) asparagine glycan is linked to Asn9. A helical transmembrane segment spans residues 31 to 51; sequence LVPHVFLLFITFPILFIGWGS. Topologically, residues 52 to 72 are cytoplasmic; that stretch reads QSSKVQIHHNTWLHFPGHNLR. Residues 73 to 93 form a helical membrane-spanning segment; the sequence is WILTFALLFVHVCEIAEGIVS. The Extracellular portion of the chain corresponds to 94–101; it reads DSRRESRH. The helical transmembrane segment at 102-122 threads the bilayer; it reads LHLFMPAVMGFVATTTSIVYY. Residues 123-132 lie on the Cytoplasmic side of the membrane; the sequence is HNIETSNFPK. A helical transmembrane segment spans residues 133–153; that stretch reads LLLALFLYWVMAFITKTIKLV. At 154–167 the chain is on the extracellular side; that stretch reads KYCQSGLDISNLRF. The chain crosses the membrane as a helical span at residues 168 to 188; sequence CITGMMVILNGLLMAVEINVI. The Cytoplasmic segment spans residues 189-301; sequence RVRRYVFFMN…AFGRPILLSS (113 aa). Residues 297-597 enclose the ABC transmembrane type-1 1 domain; sequence ILLSSTFRYL…LSTVVRFAVK (301 aa). The chain crosses the membrane as a helical span at residues 302–322; sequence TFRYLADLLGFAGPLCISGIV. Residues 323–350 are Extracellular-facing; sequence QRVNETQNGTNNTTGISETLSSKEFLEN. N-linked (GlcNAc...) asparagine glycans are attached at residues Asn326, Asn330, Asn333, and Asn334. The helical transmembrane segment at 351–371 threads the bilayer; that stretch reads AYVLAVLLFLALILQRTFLQA. Residues 372-423 lie on the Cytoplasmic side of the membrane; sequence SYYVTIETGINLRGALLAMIYNKILRLSTSNLSMGEMTLGQINNLVAIETNQ. A helical transmembrane segment spans residues 424-444; it reads LMWFLFLCPNLWAMPVQIIMG. Topologically, residues 445–455 are extracellular; the sequence is VILLYNLLGSS. The helical transmembrane segment at 456–476 threads the bilayer; that stretch reads ALVGAAVIVLLAPIQYFIATK. Over 477-531 the chain is Cytoplasmic; that stretch reads LAEAQKSTLDYSTERLKKTNEILKGIKLLKLYAWEHIFCKSVEETRMKELSSLKT. Residues 532-552 traverse the membrane as a helical segment; that stretch reads FALYTSLSIFMNAAIPIAAVL. Topologically, residues 553 to 571 are extracellular; sequence ATFVTHAYASGNNLKPAEA. The helical transmembrane segment at 572–592 threads the bilayer; that stretch reads FASLSLFHILVTPLFLLSTVV. Residues 593 to 990 lie on the Cytoplasmic side of the membrane; it reads RFAVKAIISV…TCWRYLTSGG (398 aa). The ABC transporter 1 domain occupies 672–912; it reads IKVTNGYFSW…DVELYEHWKT (241 aa). 705–712 lines the ATP pocket; sequence GQVGCGKS. The interval 944 to 967 is disordered; the sequence is REAKAQMEDEDEEEEEEEDEDDNM. Residues 951-966 show a composition bias toward acidic residues; the sequence is EDEDEEEEEEEDEDDN. A helical transmembrane segment spans residues 991-1011; that stretch reads FFLLILMIFSKLLKHSVIVAI. An ABC transmembrane type-1 2 domain is found at 994–1274; sequence LILMIFSKLL…VVRNLADLEV (281 aa). Residues 1012–1034 lie on the Extracellular side of the membrane; it reads DYWLATWTSEYSINNTGKADQTY. Residues 1035-1055 form a helical membrane-spanning segment; the sequence is YVAGFSILCGAGIFLCLVTSL. Over 1056–1127 the chain is Cytoplasmic; that stretch reads TVEWMGLTAA…TLLCLSAIGM (72 aa). The helical transmembrane segment at 1128 to 1148 threads the bilayer; that stretch reads ISYATPVFLVALLPLGVAFYF. The Extracellular portion of the chain corresponds to 1149-1245; sequence IQKYFRVASK…IASISGSSNS (97 aa). A helical membrane pass occupies residues 1246 to 1266; it reads GLVGLGLLYALTITNYLNWVV. The Cytoplasmic segment spans residues 1267–1549; it reads RNLADLEVQM…LFSTLVMTNK (283 aa). Residues 1312 to 1546 form the ABC transporter 2 domain; the sequence is IKIHDLCVRY…KNGLFSTLVM (235 aa). Position 1346–1353 (1346–1353) interacts with ATP; sequence GRTGSGKS.

The protein belongs to the ABC transporter superfamily. ABCC family. Conjugate transporter (TC 3.A.1.208) subfamily. As to quaternary structure, interacts with KCNJ11. Interacts with KCNJ8.

Its subcellular location is the membrane. In terms of biological role, subunit of ATP-sensitive potassium channels (KATP). Can form cardiac and smooth muscle-type KATP channels with KCNJ11. KCNJ11 forms the channel pore while ABCC9 is required for activation and regulation. Can form a sulfonylurea-sensitive but ATP-insensitive potassium channel with KCNJ8. The protein is ATP-binding cassette sub-family C member 9 (ABCC9) of Homo sapiens (Human).